Reading from the N-terminus, the 243-residue chain is Killer cell lectin-like receptor subfamily I member 1 (243 aa).

The Cytoplasmic portion of the chain corresponds to 1–80 (MPHSKHRDYT…RQGPKSAVWR (80 aa)). 2 short sequence motifs (ITIM motif) span residues 16 to 21 (IPYTEL) and 47 to 52 (LKYAEL). The helical; Signal-anchor for type II membrane protein transmembrane segment at 81–101 (VVTCVLGVLCVVLMITMGILV) threads the bilayer. Residues 102 to 243 (PKLFSGQEEQ…KPYACEFNKM (142 aa)) lie on the Extracellular side of the membrane. N-linked (GlcNAc...) asparagine glycosylation is found at Asn-123, Asn-191, Asn-194, Asn-200, and Asn-214. The C-type lectin domain occupies 137 to 239 (FGNNFYLFFR…CSSKKPYACE (103 aa)). Disulfide bonds link Cys-158-Cys-238 and Cys-217-Cys-230.

As to quaternary structure, heterodimer with KLRE1. Interacts with PTPN6. As to expression, expressed in natural killer (NK) cells.

The protein localises to the cell membrane. Its function is as follows. Lectin-like receptor for natural killer (NK) cells. Heterodimer formation with KLRE1 mediates inhibition of NK cell cytolytic activity. The chain is Killer cell lectin-like receptor subfamily I member 1 from Rattus norvegicus (Rat).